Consider the following 165-residue polypeptide: Chorismate pyruvate-lyase (165 aa).

Substrate is bound by residues Met-35, Arg-77, Leu-115, and Glu-156.

This sequence belongs to the UbiC family. Monomer.

It localises to the cytoplasm. The enzyme catalyses chorismate = 4-hydroxybenzoate + pyruvate. It participates in cofactor biosynthesis; ubiquinone biosynthesis. Functionally, removes the pyruvyl group from chorismate, with concomitant aromatization of the ring, to provide 4-hydroxybenzoate (4HB) for the ubiquinone pathway. In Salmonella enteritidis PT4 (strain P125109), this protein is Chorismate pyruvate-lyase.